The following is a 510-amino-acid chain: 2,3-bisphosphoglycerate-independent phosphoglycerate mutase (510 aa).

Residues Asp-15 and Ser-65 each coordinate Mn(2+). Catalysis depends on Ser-65, which acts as the Phosphoserine intermediate. Residues His-126, 155-156 (RD), Arg-187, Arg-193, 259-262 (RPDR), and Lys-332 each bind substrate. The Mn(2+) site is built by Asp-399, His-403, Asp-440, His-441, and His-458.

It belongs to the BPG-independent phosphoglycerate mutase family. Requires Mn(2+) as cofactor.

Its subcellular location is the plastid. It localises to the chloroplast. The catalysed reaction is (2R)-2-phosphoglycerate = (2R)-3-phosphoglycerate. It participates in carbohydrate degradation; glycolysis; pyruvate from D-glyceraldehyde 3-phosphate: step 3/5. Functionally, catalyzes the interconversion of 2-phosphoglycerate and 3-phosphoglycerate. The sequence is that of 2,3-bisphosphoglycerate-independent phosphoglycerate mutase from Antithamnion sp. (Red alga).